Consider the following 3704-residue polypeptide: Fatty acid synthase 2 (3704 aa).

Low complexity predominate over residues 27 to 41; that stretch reads AVSAHGSPPSSASPG. The segment at 27–52 is disordered; it reads AVSAHGSPPSSASPGPDDKAFSVDGT. An acetyltransferase (AT) domain region spans residues 216 to 475; the sequence is ALFGGQGNNH…QARIPFSKRK (260 aa). The segment at 639-887 is enoyl reductase (ER) domain; the sequence is SRLLGKPPIM…LIASTQGCSD (249 aa). The dehydratase (DH) domain stretch occupies residues 1216–1709; sequence GEQPSWIRAL…VPGDQLSVQL (494 aa). One can recognise a MaoC-like domain in the interval 1624–1730; that stretch reads PKTNEPYSRA…VQIDASNQRG (107 aa). The segment at 1747–2112 is malonyl/palmitoyl transferase (MT/PT) domain; sequence YVFTGQGSQA…IEHVSEVTRS (366 aa). One can recognise a Carrier domain in the interval 2265 to 2343; sequence DERLDPLLTV…AALRPGYSGE (79 aa). Serine 2303 is modified (O-(pantetheine 4'-phosphoryl)serine). Residues 2733–2969 form a ketoreductase (KR) domain region; sequence GLDVLLTGVG…LGLVEPEFAS (237 aa). One can recognise a Ketosynthase family 3 (KS3) domain in the interval 3176–3623; that stretch reads QQEIELTHDL…QVGGIAMILH (448 aa). Catalysis depends on for beta-ketoacyl synthase activity residues cysteine 3359, histidine 3506, and histidine 3547.

It in the N-terminal section; belongs to the fungal fatty acid synthetase subunit beta family. The protein in the C-terminal section; belongs to the thiolase-like superfamily. Fungal fatty acid synthetase subunit alpha family.

Its pathway is secondary metabolite biosynthesis. Its function is as follows. Fatty acid synthase; part of the gene cluster that mediates the biosynthesis of the glycolipid biosurfactant ustilagic acid (UA). UA is a secreted cellobiose glycolipid that is toxic for many microorganisms and confers biocontrol activity to U.maydis. UA consists of 15,16-dihydroxypalmitic or 2,15,16-trihydroxypalmitic acid, which is O-glycosidically linked to cellobiose at its terminal hydroxyl group. In addition, the cellobiose moiety is acetylated and acylated with a short-chain hydroxy fatty acid. UA biosynthesis starts with omega-hydroxylation of palmitic acid catalyzed by the cytochrome P450 monooxygenase cyp1. Terminal hydroxylation of palmitic acid precedes subterminal hydroxylation catalyzed by the cytochrome P450 monooxygenase cyp2. Sequential glucosylation of the hydroxy fatty acid is probably catalyzed by the glycosyltransferase ugt1. The cellobiose lipid is further decorated by acetylation of the proximal glucose residue and by acylation with a short-chain beta-hydroxy fatty acid at the distal glucose residue. The acyltransferase uat1 may be a good candidate for catalyzing either acetylation or acylation of the cellobiose lipid. The fatty acid synthase fas2 may be involved in synthesis of the carbon backbone of the short-chain beta-hydroxy fatty acid esterified to the cellobiose disaccharide. The secreted UA consists of a mixture of both alpha-hydroxylated and non-hydroxylated glycolipids; therefore, alpha-hydroxylation of the long-chain fatty, catalyzed by the fatty acid hydroxylase ahd1, occurs late in UA biosynthesis and may be the last step before secretion. This chain is Fatty acid synthase 2, found in Mycosarcoma maydis (Corn smut fungus).